Here is a 335-residue protein sequence, read N- to C-terminus: MKVEFAPLNIQLARRLQTVAVLQWVLKYLLLGPMSIGITVMLIIHNYLFLYIPYLMWLYFDWHTPERGGRRSSWIKNWTLWKHFKDYFPIHLIKTQDLDPSHNYIFGFHPHGIMAVGAFGNFSVNYSDFKDLFPGFTSYLHVLPLWFWCPVFREYVMSVGLVSVSKKSVSYMVSKEGGGNISVIVLGGAKESLDAHPGKFTLFIRQRKGFVKIALTHGASLVPVVSFGENELFKQTDNPEGSWIRTVQNKLQKIMGFALPLFHARGVFQYNFGLMTYRKAIHTVVGRPIPVRQTLNPTQEQIEELHQTYMEELRKLFEEHKGKYGIPEHETLVLK.

Helical transmembrane passes span Thr18–Ile38 and Val40–Phe60. N-linked (GlcNAc...) asparagine glycosylation is found at Asn121 and Asn125. The helical transmembrane segment at Leu132–Phe152 threads the bilayer. An N-linked (GlcNAc...) asparagine glycan is attached at Asn180.

It belongs to the diacylglycerol acyltransferase family. Expressed in stomach and liver.

It localises to the endoplasmic reticulum membrane. It carries out the reaction a 2-acylglycerol + an acyl-CoA = a 1,2-diacylglycerol + CoA. It catalyses the reaction 2-(9Z-octadecenoyl)-glycerol + butanoyl-CoA = 1-butanoyl-2-(9Z-octadecenoyl)-glycerol + CoA. The catalysed reaction is 2-(9Z-octadecenoyl)-glycerol + octanoyl-CoA = 1-octanoyl-2-(9Z-octadecenoyl)-glycerol + CoA. The enzyme catalyses 2-(9Z-octadecenoyl)-glycerol + dodecanoyl-CoA = 1-dodecanoyl-2-(9Z-octadecenoyl)-glycerol + CoA. It carries out the reaction 2-(9Z-octadecenoyl)-glycerol + tetradecanoyl-CoA = 1-tetradecanoyl-2-(9Z-octadecenoyl)-glycerol + CoA. It catalyses the reaction 2-(9Z-octadecenoyl)-glycerol + hexadecanoyl-CoA = 1-hexadecanoyl-2-(9Z-octadecenoyl)-glycerol + CoA. The catalysed reaction is 2-(9Z-octadecenoyl)-glycerol + octadecanoyl-CoA = 1-octadecanoyl-2-(9Z-octadecenoyl)-glycerol + CoA. The enzyme catalyses eicosanoyl-CoA + 2-(9Z-octadecenoyl)-glycerol = 1-eicosanoyl-2-(9Z-octadecenoyl)-glycerol + CoA. It carries out the reaction 2-(9Z-octadecenoyl)-glycerol + (9Z)-octadecenoyl-CoA = 1,2-di-(9Z-octadecenoyl)-glycerol + CoA. It catalyses the reaction 2-(9Z-octadecenoyl)-glycerol + (9Z,12Z)-octadecadienoyl-CoA = 1-(9Z,12Z-octadecadienoyl)-2-(9Z-octadecenoyl)-glycerol + CoA. The catalysed reaction is 2-(9Z-octadecenoyl)-glycerol + (5Z,8Z,11Z,14Z)-eicosatetraenoyl-CoA = 1-(5Z,8Z,11Z,14Z-eicosatetraenoyl)-2-(9Z-octadecenoyl)-glycerol + CoA. The enzyme catalyses a 2-acylglycerol + an acyl-CoA = a 1,2-diacyl-sn-glycerol + CoA. It carries out the reaction a 2-acylglycerol + an acyl-CoA = a 2,3-diacyl-sn-glycerol + CoA. It catalyses the reaction a 1-acylglycerol + an acyl-CoA = a 1,2-diacylglycerol + CoA. The catalysed reaction is 1-dodecanoylglycerol + (9Z)-octadecenoyl-CoA = 1-dodecanoyl-2-(9Z-octadecenoyl)-glycerol + CoA. The enzyme catalyses 1-tetradecanoylglycerol + (9Z)-octadecenoyl-CoA = 1-tetradecanoyl-2-(9Z-octadecenoyl)-glycerol + CoA. It carries out the reaction 1-hexadecanoylglycerol + (9Z)-octadecenoyl-CoA = 1-hexadecanoyl-2-(9Z-octadecenoyl)-glycerol + CoA. It catalyses the reaction 1-(9Z-octadecenoyl)-glycerol + (9Z)-octadecenoyl-CoA = 1,2-di-(9Z-octadecenoyl)-glycerol + CoA. The catalysed reaction is 1-(9Z,12Z-octadecadienoyl)-glycerol + (9Z)-octadecenoyl-CoA = 1-(9Z,12Z-octadecadienoyl)-2-(9Z-octadecenoyl)-glycerol + CoA. The enzyme catalyses 1-(9Z,12Z,15Z-octadecatrienoyl)-glycerol + (9Z)-octadecenoyl-CoA = 1-(9Z,12Z,15Z-octadecatrienoyl)-2-(9Z-octadecenoyl)-glycerol + CoA. It carries out the reaction 1-(5Z,8Z,11Z,14Z-eicosatetraenoyl)-glycerol + (9Z)-octadecenoyl-CoA = 1-(5Z,8Z,11Z,14Z-eicosatetraenoyl)-2-(9Z-octadecenoyl)-glycerol + CoA. It catalyses the reaction a 1-acylglycerol + an acyl-CoA = a 1,3-diacylglycerol + CoA. The catalysed reaction is 1-dodecanoylglycerol + (9Z)-octadecenoyl-CoA = 1-dodecanoyl-3-(9Z-octadecenoyl)-glycerol + CoA. The enzyme catalyses 1-hexadecanoylglycerol + (9Z)-octadecenoyl-CoA = 1-(9Z-octadecenoyl)-3-hexadecanoylglycerol + CoA. It carries out the reaction 1-octadecanoylglycerol + (9Z)-octadecenoyl-CoA = 1-octadecanoyl-3-(9Z-octadecenoyl)-glycerol + CoA. It catalyses the reaction 1-(9Z-octadecenoyl)-sn-glycerol + (9Z)-octadecenoyl-CoA = 1,3-di-(9Z-octadecenoyl)-glycerol + CoA. The catalysed reaction is 1-(9Z,12Z-octadecadienoyl)-glycerol + (9Z)-octadecenoyl-CoA = 1-(9Z-octadecenoyl)-3-(9Z,12Z-octadecadienoyl)-glycerol + CoA. The enzyme catalyses 1-(9Z,12Z,15Z-octadecatrienoyl)-glycerol + (9Z)-octadecenoyl-CoA = 1-(9Z,12Z,15Z-octadecatrienoyl)-3-(9Z-octadecenoyl)-glycerol + CoA. It carries out the reaction a 1-acyl-sn-glycerol + an acyl-CoA = a 1,3-diacyl-sn-glycerol + CoA. It catalyses the reaction a 3-acyl-sn-glycerol + an acyl-CoA = a 1,3-diacyl-sn-glycerol + CoA. The catalysed reaction is 3-octadecanoyl-sn-glycerol + (9Z)-octadecenoyl-CoA = 1-(9Z-octadecenoyl)-3-octadecanoyl-sn-glycerol + CoA. It functions in the pathway glycerolipid metabolism; triacylglycerol biosynthesis. Functionally, involved in glycerolipid synthesis and lipid metabolism. Catalyzes the formation of diacylglycerol, the precursor of triacylglycerol, by transferring the acyl chain of a fatty acyl-CoA to a monoacylglycerol, mainly at the sn-1 or sn-3 positions. It uses both sn-2-monoacylglycerol (2-acylglycerol) and sn-1-monoacylglycerol (1-acyl-sn-glycerol) equally well as substrates, and uses sn-3-monoacylglycerol (3-acyl-sn-glycerol) with lower efficiency. Probably not involved in absorption of dietary fat in the small intestine. The chain is 2-acylglycerol O-acyltransferase 1 from Homo sapiens (Human).